The chain runs to 325 residues: Putative metal ion transporter ZIPCO (325 aa).

The next 3 membrane-spanning stretches (helical) occupy residues 5 to 25 (TFLA…PAYI), 46 to 66 (IASG…VIIL), and 74 to 94 (LYYI…TDIL). Residues Asn-106 and Asn-160 are each glycosylated (N-linked (GlcNAc...) asparagine). Transmembrane regions (helical) follow at residues 179–199 (FFIV…MGSL), 239–259 (IYAW…IFSF), 264–284 (FVEI…SFNM), and 296–316 (HFIS…MILF).

It is found in the cytoplasmic vesicle membrane. Putative transporter for the divalent zinc and iron cations. This Plasmodium falciparum (isolate 3D7) protein is Putative metal ion transporter ZIPCO.